Reading from the N-terminus, the 146-residue chain is Bradykinin-like neuropeptide (146 aa).

An N-terminal signal peptide occupies residues 1-24; sequence MTSSIYGFITLSVVALISQTTCRS. 2 propeptides span residues 25 to 80 and 92 to 146; these read LDLL…LMEA and LRSY…FRYG.

In terms of tissue distribution, neuron L5.

It is found in the secreted. May have important functions in renal physiology and in animal behavior, as does bradykinin. This chain is Bradykinin-like neuropeptide (LUQ-1), found in Aplysia californica (California sea hare).